Reading from the N-terminus, the 196-residue chain is Large ribosomal subunit protein eL15 (196 aa).

Residues 156–196 are disordered; it reads HRGRAERGKTSAGRKGRGMRTRGRGTEKTRPSIRSHANQGK. Basic residues predominate over residues 167 to 178; that stretch reads AGRKGRGMRTRG.

Belongs to the eukaryotic ribosomal protein eL15 family.

In Methanoregula boonei (strain DSM 21154 / JCM 14090 / 6A8), this protein is Large ribosomal subunit protein eL15.